We begin with the raw amino-acid sequence, 234 residues long: MQLITTENKLAGSKKALEIIEKGITSGEVNTLGLATGSTPETLYAELVKSDVDTKNVTTTNLDEYVGLAANDPNSYHYYMNELLFSKKAFKESFLPNGEATDAEAECARYEEILSEHPIDIQVLGIGTNGHIGFNEPGTSFDSLTHKVVLTDSTREANKRFFEREEDVPTHAYSMGIKSIMNAKKIILLAFGENKAQAIKETIKGPVDVNCPASVLQNHPDVTVILDNEAASLL.

The active-site Proton acceptor; for enolization step is the Asp-63. The For ring-opening step role is filled by Asn-129. His-131 functions as the Proton acceptor; for ring-opening step in the catalytic mechanism. Glu-136 acts as the For ring-opening step in catalysis.

Belongs to the glucosamine/galactosamine-6-phosphate isomerase family. NagB subfamily.

It carries out the reaction alpha-D-glucosamine 6-phosphate + H2O = beta-D-fructose 6-phosphate + NH4(+). Its pathway is amino-sugar metabolism; N-acetylneuraminate degradation; D-fructose 6-phosphate from N-acetylneuraminate: step 5/5. In terms of biological role, catalyzes the reversible isomerization-deamination of glucosamine 6-phosphate (GlcN6P) to form fructose 6-phosphate (Fru6P) and ammonium ion. The polypeptide is Glucosamine-6-phosphate deaminase (Listeria monocytogenes serotype 4a (strain HCC23)).